Reading from the N-terminus, the 385-residue chain is S-adenosylmethionine synthase (385 aa).

An ATP-binding site is contributed by His16. Asp18 serves as a coordination point for Mg(2+). Glu44 is a binding site for K(+). L-methionine contacts are provided by Glu57 and Gln100. The tract at residues 100–110 (QSPDINQGVDR) is flexible loop. ATP contacts are provided by residues 164–166 (DGK), 230–231 (KF), Asp239, 245–246 (RK), Ala262, and Lys266. Asp239 contacts L-methionine. Lys270 contributes to the L-methionine binding site.

The protein belongs to the AdoMet synthase family. In terms of assembly, homotetramer; dimer of dimers. Mg(2+) is required as a cofactor. K(+) serves as cofactor.

The protein resides in the cytoplasm. The enzyme catalyses L-methionine + ATP + H2O = S-adenosyl-L-methionine + phosphate + diphosphate. Its pathway is amino-acid biosynthesis; S-adenosyl-L-methionine biosynthesis; S-adenosyl-L-methionine from L-methionine: step 1/1. Its function is as follows. Catalyzes the formation of S-adenosylmethionine (AdoMet) from methionine and ATP. The overall synthetic reaction is composed of two sequential steps, AdoMet formation and the subsequent tripolyphosphate hydrolysis which occurs prior to release of AdoMet from the enzyme. In Helicobacter pylori (strain Shi470), this protein is S-adenosylmethionine synthase.